A 419-amino-acid polypeptide reads, in one-letter code: Acyl-[acyl-carrier-protein] hydrolase FATB1, chloroplastic (419 aa).

The N-terminal 50 residues, 1–50, are a transit peptide targeting the chloroplast; sequence MVAAAATSAFFPVPAPGTSPKPGKSGNWPSSLSPTFKPKSIPNGGFQVKA. A disordered region spans residues 1–84; sequence MVAAAATSAF…DTSSSPPPRA (84 aa). Polar residues predominate over residues 61–78; the sequence is SAVNLKSGSLNTQEDTSS. Active-site residues include Asn315, His317, and Cys352. The tract at residues 390-419 is disordered; that stretch reads SRTEWRPKNAGTNGAISTSTAKTSNGNSVS. Residues 399 to 419 are compositionally biased toward polar residues; that stretch reads AGTNGAISTSTAKTSNGNSVS.

It belongs to the acyl-ACP thioesterase family.

The protein localises to the plastid. The protein resides in the chloroplast. It carries out the reaction octanoyl-[ACP] + H2O = octanoate + holo-[ACP] + H(+). It catalyses the reaction decanoyl-[ACP] + H2O = decanoate + holo-[ACP] + H(+). Its function is as follows. Plays an essential role in chain termination during de novo fatty acid synthesis. Possesses thioesterase activity for short chain acyl-ACPs. Substrate preference is 8:0 &gt; 10:0. The chain is Acyl-[acyl-carrier-protein] hydrolase FATB1, chloroplastic from Cuphea viscosissima (Blue waxweed).